Here is a 34-residue protein sequence, read N- to C-terminus: Phospholipase A2 (34 aa).

H18 is an active-site residue. D19 serves as a coordination point for Ca(2+).

It belongs to the phospholipase A2 family. Group I subfamily. D49 sub-subfamily. It depends on Ca(2+) as a cofactor. Post-translationally, contains 7 disulfide bonds. In terms of tissue distribution, expressed by the venom gland.

Its subcellular location is the secreted. It carries out the reaction a 1,2-diacyl-sn-glycero-3-phosphocholine + H2O = a 1-acyl-sn-glycero-3-phosphocholine + a fatty acid + H(+). Functionally, snake venom phospholipase A2 (PLA2) that strongly inhibits platelet aggregation and has a strong anticoagulant activity. PLA2 catalyzes the calcium-dependent hydrolysis of the 2-acyl groups in 3-sn-phosphoglycerides. The sequence is that of Phospholipase A2 from Pseudechis papuanus (Papuan black snake).